Consider the following 361-residue polypeptide: tRNA-specific 2-thiouridylase MnmA (361 aa).

Residues 6 to 13 and leucine 32 contribute to the ATP site; that span reads AMSGGVDS. The active-site Nucleophile is the cysteine 101. The cysteines at positions 101 and 194 are disulfide-linked. Residue glycine 125 participates in ATP binding. An interaction with tRNA region spans residues 144-146; that stretch reads KDQ. The active-site Cysteine persulfide intermediate is the cysteine 194.

The protein belongs to the MnmA/TRMU family.

It is found in the cytoplasm. It catalyses the reaction S-sulfanyl-L-cysteinyl-[protein] + uridine(34) in tRNA + AH2 + ATP = 2-thiouridine(34) in tRNA + L-cysteinyl-[protein] + A + AMP + diphosphate + H(+). Its function is as follows. Catalyzes the 2-thiolation of uridine at the wobble position (U34) of tRNA, leading to the formation of s(2)U34. The sequence is that of tRNA-specific 2-thiouridylase MnmA from Corynebacterium aurimucosum (strain ATCC 700975 / DSM 44827 / CIP 107346 / CN-1) (Corynebacterium nigricans).